The following is a 192-amino-acid chain: Orotate phosphoribosyltransferase (192 aa).

116 to 124 provides a ligand contact to 5-phospho-alpha-D-ribose 1-diphosphate; sequence EDIVTTGLS. 2 residues coordinate orotate: T120 and R148.

Belongs to the purine/pyrimidine phosphoribosyltransferase family. PyrE subfamily. Homodimer. Requires Mg(2+) as cofactor.

The catalysed reaction is orotidine 5'-phosphate + diphosphate = orotate + 5-phospho-alpha-D-ribose 1-diphosphate. Its pathway is pyrimidine metabolism; UMP biosynthesis via de novo pathway; UMP from orotate: step 1/2. Functionally, catalyzes the transfer of a ribosyl phosphate group from 5-phosphoribose 1-diphosphate to orotate, leading to the formation of orotidine monophosphate (OMP). The chain is Orotate phosphoribosyltransferase from Bartonella henselae (strain ATCC 49882 / DSM 28221 / CCUG 30454 / Houston 1) (Rochalimaea henselae).